The primary structure comprises 468 residues: Glutamate--tRNA ligase (468 aa).

The 'HIGH' region signature appears at 12 to 22 (PSPTGMMHIGT). A 'KMSKS' region motif is present at residues 238 to 242 (KLSKR). Position 241 (K241) interacts with ATP.

It belongs to the class-I aminoacyl-tRNA synthetase family. Glutamate--tRNA ligase type 1 subfamily. As to quaternary structure, monomer.

The protein resides in the cytoplasm. The catalysed reaction is tRNA(Glu) + L-glutamate + ATP = L-glutamyl-tRNA(Glu) + AMP + diphosphate. In terms of biological role, catalyzes the attachment of glutamate to tRNA(Glu) in a two-step reaction: glutamate is first activated by ATP to form Glu-AMP and then transferred to the acceptor end of tRNA(Glu). The polypeptide is Glutamate--tRNA ligase (Phenylobacterium zucineum (strain HLK1)).